We begin with the raw amino-acid sequence, 452 residues long: tRNA modification GTPase MnmE (452 aa).

Positions 28, 85, and 124 each coordinate (6S)-5-formyl-5,6,7,8-tetrahydrofolate. The 159-residue stretch at 220-378 (GMNVVLVGRP…LRTELLRAAG (159 aa)) folds into the TrmE-type G domain. Residue Asn-230 participates in K(+) binding. Residues 230 to 235 (NVGKSS), 249 to 255 (TDVAGTT), 274 to 277 (DTAG), and 359 to 361 (SAR) each bind GTP. Ser-234 serves as a coordination point for Mg(2+). 3 residues coordinate K(+): Thr-249, Val-251, and Thr-254. Thr-255 is a Mg(2+) binding site. A (6S)-5-formyl-5,6,7,8-tetrahydrofolate-binding site is contributed by Lys-452.

This sequence belongs to the TRAFAC class TrmE-Era-EngA-EngB-Septin-like GTPase superfamily. TrmE GTPase family. Homodimer. Heterotetramer of two MnmE and two MnmG subunits. K(+) serves as cofactor.

It is found in the cytoplasm. Its function is as follows. Exhibits a very high intrinsic GTPase hydrolysis rate. Involved in the addition of a carboxymethylaminomethyl (cmnm) group at the wobble position (U34) of certain tRNAs, forming tRNA-cmnm(5)s(2)U34. The chain is tRNA modification GTPase MnmE from Azoarcus sp. (strain BH72).